Here is a 91-residue protein sequence, read N- to C-terminus: Class I hydrophobin E (91 aa).

The N-terminal stretch at 1-16 (MKFSIAAIALAAVAVA) is a signal peptide. Intrachain disulfides connect Cys30-Cys72, Cys42-Cys64, Cys43-Cys55, and Cys73-Cys89. Residue Asn83 is glycosylated (N-linked (GlcNAc...) asparagine).

The protein belongs to the fungal hydrophobin family.

The protein localises to the secreted. It is found in the cell wall. The protein resides in the vacuole. It localises to the cytoplasmic vesicle. Aerial growth, conidiation, and dispersal of filamentous fungi in the environment rely upon a capability of their secreting small amphipathic proteins called hydrophobins (HPBs) with low sequence identity. Class I can self-assemble into an outermost layer of rodlet bundles on aerial cell surfaces, conferring cellular hydrophobicity that supports fungal growth, development and dispersal; whereas Class II form highly ordered films at water-air interfaces through intermolecular interactions but contribute nothing to the rodlet structure. Hyd1E contributes to certain cell wall-related features, such as hydrophobicity but is not involved in cell wall-related events during fungal proliferation in host hemocoel. Does not contribute to conidial hydrophobicity. The sequence is that of Class I hydrophobin E from Beauveria bassiana (strain ARSEF 2860) (White muscardine disease fungus).